The following is a 397-amino-acid chain: L-cysteine desulfidase (397 aa).

The active-site Proton acceptor is the C23. The [4Fe-4S] cluster site is built by C288, C330, and C337.

Belongs to the L-cysteine desulfidase family. Homotrimer. Requires [4Fe-4S] cluster as cofactor.

The catalysed reaction is L-cysteine + H2O = hydrogen sulfide + pyruvate + NH4(+) + H(+). Catalyzes the cleavage of L-cysteine to form 2-aminoprop-2-enoate and sulfide. The former then spontaneously hydrolyzes to pyruvate and NH(3). May be responsible for the production of sulfide required for the biosynthesis of iron-sulfur centers in this archaea. The chain is L-cysteine desulfidase from Methanococcus maripaludis (strain C7 / ATCC BAA-1331).